The primary structure comprises 299 residues: ATP phosphoribosyltransferase (299 aa).

This sequence belongs to the ATP phosphoribosyltransferase family. Long subfamily. Mg(2+) serves as cofactor.

It is found in the cytoplasm. The catalysed reaction is 1-(5-phospho-beta-D-ribosyl)-ATP + diphosphate = 5-phospho-alpha-D-ribose 1-diphosphate + ATP. The protein operates within amino-acid biosynthesis; L-histidine biosynthesis; L-histidine from 5-phospho-alpha-D-ribose 1-diphosphate: step 1/9. With respect to regulation, feedback inhibited by histidine. Its function is as follows. Catalyzes the condensation of ATP and 5-phosphoribose 1-diphosphate to form N'-(5'-phosphoribosyl)-ATP (PR-ATP). Has a crucial role in the pathway because the rate of histidine biosynthesis seems to be controlled primarily by regulation of HisG enzymatic activity. The protein is ATP phosphoribosyltransferase of Shewanella woodyi (strain ATCC 51908 / MS32).